The chain runs to 110 residues: MNRIKKGDTVVVISGKNKNKSGVVIQVNPKEQTALVEGVNKIKRHQKKDQTHEQSGIIEKEAPIRLCKLALVDPKGKDKGKATKVKYLLKDNKKVRVARKSGSELDVNKK.

The protein belongs to the universal ribosomal protein uL24 family. As to quaternary structure, part of the 50S ribosomal subunit.

Its function is as follows. One of two assembly initiator proteins, it binds directly to the 5'-end of the 23S rRNA, where it nucleates assembly of the 50S subunit. One of the proteins that surrounds the polypeptide exit tunnel on the outside of the subunit. The sequence is that of Large ribosomal subunit protein uL24 from Ureaplasma parvum serovar 3 (strain ATCC 27815 / 27 / NCTC 11736).